The chain runs to 431 residues: 23S rRNA (uracil(1939)-C(5))-methyltransferase RlmD (431 aa).

A TRAM domain is found at 8–68 (KRRVTTRQII…SKYSRGQVKR (61 aa)). Residues Cys-81, Cys-87, Cys-90, and Cys-162 each coordinate [4Fe-4S] cluster. S-adenosyl-L-methionine-binding residues include Gln-265, Phe-294, Asn-299, Glu-315, Asn-342, and Asp-363. Cys-389 serves as the catalytic Nucleophile.

It belongs to the class I-like SAM-binding methyltransferase superfamily. RNA M5U methyltransferase family. RlmD subfamily.

The catalysed reaction is uridine(1939) in 23S rRNA + S-adenosyl-L-methionine = 5-methyluridine(1939) in 23S rRNA + S-adenosyl-L-homocysteine + H(+). Catalyzes the formation of 5-methyl-uridine at position 1939 (m5U1939) in 23S rRNA. This is 23S rRNA (uracil(1939)-C(5))-methyltransferase RlmD from Enterobacter sp. (strain 638).